The following is a 496-amino-acid chain: Glutamyl-tRNA(Gln) amidotransferase subunit B, organellar chromatophore (496 aa).

This sequence belongs to the GatB/GatE family. GatB subfamily. Subunit of the heterotrimeric GatCAB amidotransferase (AdT) complex, composed of A, B and C subunits.

It localises to the plastid. The protein resides in the organellar chromatophore. It catalyses the reaction L-glutamyl-tRNA(Gln) + L-glutamine + ATP + H2O = L-glutaminyl-tRNA(Gln) + L-glutamate + ADP + phosphate + H(+). Its function is as follows. Allows the formation of correctly charged Gln-tRNA(Gln) through the transamidation of misacylated Glu-tRNA(Gln). The reaction takes place in the presence of glutamine and ATP through an activated gamma-phospho-Glu-tRNA(Gln). This is Glutamyl-tRNA(Gln) amidotransferase subunit B, organellar chromatophore from Paulinella chromatophora.